The primary structure comprises 520 residues: Probable E3 ubiquitin-protein ligase XBOS33 (520 aa).

ANK repeat units follow at residues Gly44–Val73, Cys77–Arg106, Ser111–Pro140, Gly185–Ala214, and Ala228–Leu258. Residues Cys327–Arg377 form an RING-type zinc finger. The span at Gln467–His479 shows a compositional bias: polar residues. Residues Gln467–Leu493 are disordered. The segment covering Glu484–Leu493 has biased composition (basic and acidic residues).

It catalyses the reaction S-ubiquitinyl-[E2 ubiquitin-conjugating enzyme]-L-cysteine + [acceptor protein]-L-lysine = [E2 ubiquitin-conjugating enzyme]-L-cysteine + N(6)-ubiquitinyl-[acceptor protein]-L-lysine.. The protein operates within protein modification; protein ubiquitination. The protein is Probable E3 ubiquitin-protein ligase XBOS33 (XBOS33) of Oryza sativa subsp. japonica (Rice).